Here is a 72-residue protein sequence, read N- to C-terminus: MAKDDVIEVEGTVIEALPNAMFQVQLDNGHKVLAHVSGKLRMNFIRILPGDRVKVELSPYDLTRGRIVWRGK.

Residues 1–72 (MAKDDVIEVE…TRGRIVWRGK (72 aa)) enclose the S1-like domain.

It belongs to the IF-1 family. In terms of assembly, component of the 30S ribosomal translation pre-initiation complex which assembles on the 30S ribosome in the order IF-2 and IF-3, IF-1 and N-formylmethionyl-tRNA(fMet); mRNA recruitment can occur at any time during PIC assembly.

It localises to the cytoplasm. One of the essential components for the initiation of protein synthesis. Stabilizes the binding of IF-2 and IF-3 on the 30S subunit to which N-formylmethionyl-tRNA(fMet) subsequently binds. Helps modulate mRNA selection, yielding the 30S pre-initiation complex (PIC). Upon addition of the 50S ribosomal subunit IF-1, IF-2 and IF-3 are released leaving the mature 70S translation initiation complex. In Caldanaerobacter subterraneus subsp. tengcongensis (strain DSM 15242 / JCM 11007 / NBRC 100824 / MB4) (Thermoanaerobacter tengcongensis), this protein is Translation initiation factor IF-1.